The chain runs to 1738 residues: Sodium leak channel NALCN (1738 aa).

The Cytoplasmic segment spans residues 1–36 (MLKRKQSSRVEAQPVTDFGPDESLSDNADILWINKP). A helical transmembrane segment spans residues 37-57 (WVHSLLRICAIISVISVCMNT). At 58-65 (PMTFEHYP) the chain is on the extracellular side. A helical transmembrane segment spans residues 66–90 (PLQYVTFTLDTLLMFLYTAEMIAKM). Residues 91-106 (HIRGIVKGDSSYVKDR) are Cytoplasmic-facing. A helical membrane pass occupies residues 107-129 (WCVFDGFMVFCLWVSLVLQVFEI). Over 130–137 (ADIVDQMS) the chain is Extracellular. The helical; Voltage-sensor transmembrane segment at 138 to 158 (PWGMLRIPRPLIMIRAFRIYF) threads the bilayer. Topologically, residues 159–173 (RFELPRTRITNILKR) are cytoplasmic. Residues 174-199 (SGEQIWSVSIFLLFFLLLYGILGVQM) traverse the membrane as a helical segment. Residues 200–269 (FGTFTYHCVV…YSGFNEIGTS (70 aa)) are Extracellular-facing. 2 cysteine pairs are disulfide-bonded: C207–C239 and C229–C245. Residues N210 and N216 are each glycosylated (N-linked (GlcNAc...) asparagine). Positions 270–289 (IFTVYEAASQEGWVFLMYRA) form an intramembrane region, pore-forming. At 290 to 294 (IDSFP) the chain is on the extracellular side. A helical membrane pass occupies residues 295-322 (RWRSYFYFITLIFFLAWLVKNVFIAVII). The Cytoplasmic portion of the chain corresponds to 323 to 382 (ETFAEIRVQFQQMWGSRSSTTSTATTQMFHEDAAGGWQLVAVDVNKPQGRAPACLQKMMR). Residues 383–403 (SSVFHMFILSMVTVDVIVAAS) traverse the membrane as a helical segment. Over 404–416 (NYYKGENFRRQYD) the chain is Extracellular. The chain crosses the membrane as a helical span at residues 417-439 (EFYLAEVAFTVLFDLEALLKIWC). Over 440–447 (LGFTGYIS) the chain is Cytoplasmic. The chain crosses the membrane as a helical span at residues 448-468 (SSLHKFELLLVIGTTLHVYPD). Topologically, residues 469-472 (LYHS) are extracellular. Residues 473–492 (QFTYFQVLRVVRLIKISPAL) form a helical; Voltage-sensor membrane-spanning segment. Over 493–502 (EDFVYKIFGP) the chain is Cytoplasmic. The chain crosses the membrane as a helical span at residues 503 to 530 (GKKLGSLVVFTASLLIVMSAISLQMFCF). Residues 531-543 (VEELDRFTTFPRA) lie on the Extracellular side of the membrane. The pore-forming intramembrane region spans 544 to 563 (FMSMFQILTQEGWVDVMDQT). Residues 564–569 (LNAVGH) lie on the Extracellular side of the membrane. The helical transmembrane segment at 570 to 599 (MWAPVVAIYFILYHLFATLILLSLFVAVIL) threads the bilayer. The Cytoplasmic portion of the chain corresponds to 600 to 886 (DNLELDEDLK…QLYDLLGLVT (287 aa)). The tract at residues 762–785 (QERRSLRHGSNSQRISRGKSLETL) is disordered. The stretch at 795–830 (YRNAQREDSEIKMIQEKKEQAEMKRKVQEEELRENH) forms a coiled coil. Residues 887–906 (YLDWVMIIVTICSCISMMFE) form a helical membrane-spanning segment. At 907–915 (SPFRRVMHA) the chain is on the extracellular side. A helical transmembrane segment spans residues 916–939 (PTLQIAEYVFVIFMSIELNLKIMA). Residues 940-947 (DGLFFTPT) lie on the Cytoplasmic side of the membrane. The helical transmembrane segment at 948–972 (AVIRDFGGVMDIFIYLVSLIFLCWM) threads the bilayer. Residues 973 to 980 (PQNVPAES) lie on the Extracellular side of the membrane. A helical; Voltage-sensor transmembrane segment spans residues 981-1003 (GAQLLMVLRCLRPLRIFKLVPQM). Topologically, residues 1004–1015 (RKVVRELFSGFK) are cytoplasmic. Residues 1016–1039 (EIFLVSILLLTLMLVFASFGVQLF) traverse the membrane as a helical segment. Topologically, residues 1040–1104 (AGKLAKCNDP…NFNFDNVGNA (65 aa)) are extracellular. Residues C1046 and C1057 are joined by a disulfide bond. The N-linked (GlcNAc...) asparagine glycan is linked to N1064. An intramembrane region (pore-forming) is located at residues 1105-1124 (MLALFEVLSLKGWVEVRDVI). Residues 1125–1129 (IHRVG) are Extracellular-facing. A helical transmembrane segment spans residues 1130-1159 (PIHGIYIHVFVFLGCMIGLTLFVGVVIANF). The Cytoplasmic segment spans residues 1160–1210 (NENKGTALLTVDQRRWEDLKSRLKIAQPLHLPPRPDNDGFRAKMYDITQHP). A helical membrane pass occupies residues 1211–1227 (FFKRTIALLVLAQSVLL). Residues 1228–1236 (SVKWDVEDP) lie on the Extracellular side of the membrane. The chain crosses the membrane as a helical span at residues 1237–1260 (VTVPLATMSVVFTFIFVLEVTMKI). Over 1261–1271 (IAMSPAGFWQS) the chain is Cytoplasmic. The chain crosses the membrane as a helical span at residues 1272 to 1293 (RRNRYDLLVTSLGVVWVVLHFA). The Extracellular portion of the chain corresponds to 1294 to 1296 (LLN). The helical; Voltage-sensor transmembrane segment at 1297–1318 (AYTYMMGACVIVFRFFSICGKH) threads the bilayer. The Cytoplasmic portion of the chain corresponds to 1319–1331 (VTLKMLLLTVVVS). The chain crosses the membrane as a helical span at residues 1332-1357 (MYKSFFIIVGMFLLLLCYAFAGVVLF). Residues 1358–1378 (GTVKYGENINRHANFSSAGKA) lie on the Extracellular side of the membrane. Positions 1379–1398 (ITVLFRIVTGEDWNKIMHDC) form an intramembrane region, pore-forming. The Extracellular segment spans residues 1399–1420 (MVQPPFCTPDEFTYWATDCGNY). A disulfide bond links C1405 and C1417. The chain crosses the membrane as a helical span at residues 1421–1447 (AGALMYFCSFYVIIAYIMLNLLVAIIV). Residues 1448 to 1738 (ENFSLFYSTE…DESGDDLLDI (291 aa)) are Cytoplasmic-facing. The tract at residues 1611-1678 (PPSIETTQPS…QWRLPSAPKP (68 aa)) is disordered. Over residues 1613–1632 (SIETTQPSEDTNANSQDNSM) the composition is skewed to polar residues. Residues 1633–1648 (QPETSSQQQLLSPTLS) are compositionally biased toward low complexity.

The protein belongs to the NALCN family. In terms of assembly, found in a complex with NALCN, UNC79, UNC80 and NACL1; these auxiliary subunits are indispensable for the function of NALCN channel. Interacts with UNC80; required for the NALCN activation/inhibition by GPCRs in neurons. Found in a complex with NALCN, UNC79 and UNC80; UNC80 bridges NALCN to UNC79. Interacts with CHRM3. Post-translationally, phosphorylated on tyrosine residues.

Its subcellular location is the cell membrane. The catalysed reaction is Na(+)(in) = Na(+)(out). Its activity is regulated as follows. Inhibited by low micromolar concentrations of Gd(3+) and high micromolar concentrations of verapamil. Insensitive to tetrodotoxin (TTX) and potentiated by low external Ca(2+) concentration. In terms of biological role, voltage-gated ion channel responsible for the resting Na(+) permeability that controls neuronal excitability. NALCN channel functions as a multi-protein complex, which consists at least of NALCN, NALF1, UNC79 and UNC80. NALCN is the voltage-sensing, pore-forming subunit of the NALCN channel complex. NALCN channel complex is constitutively active and conducts monovalent cations but is blocked by physiological concentrations of extracellular divalent cations. In addition to its role in regulating neuronal excitability, is required for normal respiratory rhythm, systemic osmoregulation by controlling the serum sodium concentration and in the regulation of the intestinal pace-making activity in the interstitial cells of Cajal. NALCN channel is also activated by neuropeptides such as neurotensin and substance P (SP) through a SRC family kinases-dependent pathway. In addition, NALCN activity is enhanced/modulated by several GPCRs, such as CHRM3. The protein is Sodium leak channel NALCN of Homo sapiens (Human).